Consider the following 228-residue polypeptide: Apoptosis regulator R1 (228 aa).

Basic and acidic residues predominate over residues 1 to 21; it reads LNPKKKENNGVKNGDREKQHE. Residues 1-29 form a disordered region; it reads LNPKKKENNGVKNGDREKQHETGNTIFRG. A BH1 motif is present at residues 120-139; sequence SLFQGGVNWGRIVAFFVFGA. The BH2 motif lies at 171–186; it reads DWIQSNGGWNGFLTLY. Residues 207 to 227 form a helical membrane-spanning segment; it reads TVLTGAVALGALMTVGALFAS.

This sequence belongs to the Bcl-2 family.

The protein localises to the membrane. Its function is as follows. Could be the homolog of mammalian Bcl-W. The polypeptide is Apoptosis regulator R1 (Xenopus laevis (African clawed frog)).